Consider the following 216-residue polypeptide: Uracil phosphoribosyltransferase (216 aa).

Residues R85, R110, and 135–143 each bind 5-phospho-alpha-D-ribose 1-diphosphate; that span reads DPMVATGYS. Uracil contacts are provided by residues I200 and 205–207; that span reads GDA. Residue D206 coordinates 5-phospho-alpha-D-ribose 1-diphosphate.

This sequence belongs to the UPRTase family. Requires Mg(2+) as cofactor.

The catalysed reaction is UMP + diphosphate = 5-phospho-alpha-D-ribose 1-diphosphate + uracil. The protein operates within pyrimidine metabolism; UMP biosynthesis via salvage pathway; UMP from uracil: step 1/1. Allosterically activated by GTP. Catalyzes the conversion of uracil and 5-phospho-alpha-D-ribose 1-diphosphate (PRPP) to UMP and diphosphate. The sequence is that of Uracil phosphoribosyltransferase from Burkholderia ambifaria (strain ATCC BAA-244 / DSM 16087 / CCUG 44356 / LMG 19182 / AMMD) (Burkholderia cepacia (strain AMMD)).